The sequence spans 137 residues: Large ribosomal subunit protein uL16c (137 aa).

The protein belongs to the universal ribosomal protein uL16 family. In terms of assembly, part of the 50S ribosomal subunit.

Its subcellular location is the plastid. The protein localises to the chloroplast. The chain is Large ribosomal subunit protein uL16c from Adiantum capillus-veneris (Maidenhair fern).